Consider the following 341-residue polypeptide: Methionine import ATP-binding protein MetN 2 (341 aa).

The 240-residue stretch at 2-241 folds into the ABC transporter domain; that stretch reads IEASELTKVY…PKAPLTQEFI (240 aa). Residue 38–45 participates in ATP binding; sequence GYSGAGKS.

It belongs to the ABC transporter superfamily. Methionine importer (TC 3.A.1.24) family. As to quaternary structure, the complex is composed of two ATP-binding proteins (MetN), two transmembrane proteins (MetI) and a solute-binding protein (MetQ).

The protein resides in the cell membrane. The catalysed reaction is L-methionine(out) + ATP + H2O = L-methionine(in) + ADP + phosphate + H(+). It catalyses the reaction D-methionine(out) + ATP + H2O = D-methionine(in) + ADP + phosphate + H(+). Part of the ABC transporter complex MetNIQ involved in methionine import. Responsible for energy coupling to the transport system. The chain is Methionine import ATP-binding protein MetN 2 from Shouchella clausii (strain KSM-K16) (Alkalihalobacillus clausii).